The sequence spans 1590 residues: von Willebrand factor D and EGF domain-containing protein (1590 aa).

The first 20 residues, 1–20 (MPGGACVLVIALMFLAWGEA), serve as a signal peptide directing secretion. A glycan (N-linked (GlcNAc...) asparagine) is linked at asparagine 367. In terms of domain architecture, VWFD spans 423–606 (AYCYTFTDPH…EWRILPGKSM (184 aa)). 2 disulfide bridges follow: cysteine 425–cysteine 565 and cysteine 468–cysteine 477. Asparagine 703 and asparagine 968 each carry an N-linked (GlcNAc...) asparagine glycan. The EGF-like 1 domain maps to 1177–1216 (TVKSCDCLNGGSCVSDRNFSPGSGVYLCVCLPGFHGSLCE). Disulfide bonds link cysteine 1181-cysteine 1189, cysteine 1183-cysteine 1204, and cysteine 1206-cysteine 1215. Basic and acidic residues predominate over residues 1268 to 1280 (DKSVNKEEDDKNA). Residues 1268 to 1288 (DKSVNKEEDDKNAQGRKRHVK) are disordered. EGF-like domains are found at residues 1294–1326 (AFTI…SNCQ), 1358–1390 (DEEH…PRCE), 1422–1454 (STAL…EHCQ), 1455–1486 (NAFC…RRFQ), 1518–1550 (NTPI…VRCQ), and 1551–1582 (IPIC…VKCE). 17 cysteine pairs are disulfide-bonded: cysteine 1298/cysteine 1308, cysteine 1302/cysteine 1314, cysteine 1316/cysteine 1325, cysteine 1362/cysteine 1372, cysteine 1366/cysteine 1378, cysteine 1380/cysteine 1389, cysteine 1426/cysteine 1436, cysteine 1430/cysteine 1442, cysteine 1444/cysteine 1453, cysteine 1458/cysteine 1468, cysteine 1462/cysteine 1474, cysteine 1522/cysteine 1532, cysteine 1526/cysteine 1538, cysteine 1540/cysteine 1549, cysteine 1554/cysteine 1564, cysteine 1558/cysteine 1570, and cysteine 1572/cysteine 1581.

Its subcellular location is the secreted. The polypeptide is von Willebrand factor D and EGF domain-containing protein (VWDE) (Homo sapiens (Human)).